The primary structure comprises 121 residues: Nitrogenase-stabilizing/protective protein NifW (121 aa).

The protein belongs to the NifW family. As to quaternary structure, homotrimer; associates with NifD.

Functionally, may protect the nitrogenase Fe-Mo protein from oxidative damage. The chain is Nitrogenase-stabilizing/protective protein NifW from Methylacidiphilum infernorum (isolate V4) (Methylokorus infernorum (strain V4)).